Here is a 213-residue protein sequence, read N- to C-terminus: Uracil phosphoribosyltransferase (213 aa).

5-phospho-alpha-D-ribose 1-diphosphate contacts are provided by residues Arg-78, Arg-103, and 131-139 (DPMLATGGT). Residues Ile-197 and 202–204 (GDA) each bind uracil. A 5-phospho-alpha-D-ribose 1-diphosphate-binding site is contributed by Asp-203.

Belongs to the UPRTase family. It depends on Mg(2+) as a cofactor.

It catalyses the reaction UMP + diphosphate = 5-phospho-alpha-D-ribose 1-diphosphate + uracil. It participates in pyrimidine metabolism; UMP biosynthesis via salvage pathway; UMP from uracil: step 1/1. Its activity is regulated as follows. Allosterically activated by GTP. In terms of biological role, catalyzes the conversion of uracil and 5-phospho-alpha-D-ribose 1-diphosphate (PRPP) to UMP and diphosphate. The protein is Uracil phosphoribosyltransferase of Bifidobacterium longum (strain DJO10A).